A 453-amino-acid polypeptide reads, in one-letter code: Retroviral integration site protein Fli-1 homolog (453 aa).

Residues 111–197 (PPPPNMTTNE…SHLNYLRDSS (87 aa)) enclose the PNT domain. The segment covering 201 to 214 (GYNTQAHTDQSSRL) has biased composition (polar residues). Residues 201 to 273 (GYNTQAHTDQ…YQILGPTSSR (73 aa)) are disordered. The segment covering 215 to 226 (TAKEDPSYEAVR) has biased composition (basic and acidic residues). 2 stretches are compositionally biased toward polar residues: residues 230–239 (WGNSMSSPVT) and 246–273 (GTQN…TSSR). Positions 282–362 (IQLWQFLLEL…HGKRYAYKFD (81 aa)) form a DNA-binding region, ETS.

The protein belongs to the ETS family.

The protein resides in the nucleus. The sequence is that of Retroviral integration site protein Fli-1 homolog (fli1) from Xenopus laevis (African clawed frog).